The chain runs to 167 residues: N5-carboxyaminoimidazole ribonucleotide mutase (167 aa).

Residues Ser-11, Asp-14, and Arg-41 each contribute to the substrate site.

The protein belongs to the AIR carboxylase family. Class I subfamily.

The catalysed reaction is 5-carboxyamino-1-(5-phospho-D-ribosyl)imidazole + H(+) = 5-amino-1-(5-phospho-D-ribosyl)imidazole-4-carboxylate. It participates in purine metabolism; IMP biosynthesis via de novo pathway; 5-amino-1-(5-phospho-D-ribosyl)imidazole-4-carboxylate from 5-amino-1-(5-phospho-D-ribosyl)imidazole (N5-CAIR route): step 2/2. Its function is as follows. Catalyzes the conversion of N5-carboxyaminoimidazole ribonucleotide (N5-CAIR) to 4-carboxy-5-aminoimidazole ribonucleotide (CAIR). In Aquifex aeolicus (strain VF5), this protein is N5-carboxyaminoimidazole ribonucleotide mutase.